We begin with the raw amino-acid sequence, 217 residues long: NADPH-dependent 3-demethoxyubiquinone 3-hydroxylase, mitochondrial (217 aa).

The N-terminal 34 residues, 1–34, are a transit peptide targeting the mitochondrion; it reads MSCARALAACCLWRLRTGALQPLSAYGRRISVRF. A run of 2 repeats spans residues 48 to 129 and 130 to 217. Residues 48–217 form a 2 X approximate tandem repeats region; sequence AVDRIIRVDH…KVAIYLSERL (170 aa). NADH is bound at residue Arg-51. Residues Glu-60, Glu-90, His-93, Glu-142, Glu-178, and His-181 each coordinate Fe cation. NADH-binding residues include Lys-208, Tyr-212, and Arg-216.

The protein belongs to the COQ7 family. As to quaternary structure, component of a multi-subunit COQ enzyme complex. Interacts with COQ8B and COQ6. Interacts with COQ9. Fe cation serves as cofactor.

The protein localises to the mitochondrion inner membrane. The enzyme catalyses a 5-methoxy-2-methyl-3-(all-trans-polyprenyl)benzoquinone + NADH + O2 = a 3-demethylubiquinone + NAD(+) + H2O. It participates in cofactor biosynthesis; ubiquinone biosynthesis. Its function is as follows. Catalyzes the hydroxylation of the 5-methoxy-2-methyl-3-(all-trans-polyprenyl)benzoquinone at the C6 position and participates in the biosynthesis of ubiquinone. Catalyzes the reaction through a substrate-mediated reduction pathway, whereby NADH shuttles electrons to 5-methoxy-2-methyl-3-(all-trans-decaprenyl)benzoquinone, which then transfers the electrons to the two Fe(3+) centers. The binding of 5-methoxy-2-methyl-3-(all-trans-polyprenyl)benzoquinone (DMQn) mediates reduction of the diiron center by nicotinamide adenine dinucleotide (NADH) and initiates oxygen activation for subsequent DMQ hydroxylation. The physiological substrates are 5-methoxy-2-methyl-3-(all-trans-nonaprenyl)benzoquinone (DMQ(9)) and 5-methoxy-2-methyl-3-(all-trans-decaprenyl)benzoquinone (DMQ(10)), however in vitro the enzyme does not have any specificity concerning the length of the polyprenyl tail, and accepts tails of various lengths with similar efficiency. Also has a structural role in the COQ enzyme complex, stabilizing other COQ polypeptides. Involved in lifespan determination in a ubiquinone-independent manner. Plays a role in modulating mitochondrial stress responses, acting in the nucleus, perhaps via regulating gene expression, independent of its characterized mitochondrial function in ubiquinone biosynthesis. The polypeptide is NADPH-dependent 3-demethoxyubiquinone 3-hydroxylase, mitochondrial (Bos taurus (Bovine)).